The chain runs to 156 residues: Small ribosomal subunit protein uS7 (156 aa).

It belongs to the universal ribosomal protein uS7 family. In terms of assembly, part of the 30S ribosomal subunit. Contacts proteins S9 and S11.

Its function is as follows. One of the primary rRNA binding proteins, it binds directly to 16S rRNA where it nucleates assembly of the head domain of the 30S subunit. Is located at the subunit interface close to the decoding center, probably blocks exit of the E-site tRNA. This chain is Small ribosomal subunit protein uS7, found in Agrobacterium fabrum (strain C58 / ATCC 33970) (Agrobacterium tumefaciens (strain C58)).